Consider the following 328-residue polypeptide: Neuropeptides B/W receptor type 1 (328 aa).

The Extracellular segment spans residues 1-37 (MDNASFSEPWPANASGPDPALSCSNASTLAPLPAPLA). Residues Asn-3, Asn-13, and Asn-25 are each glycosylated (N-linked (GlcNAc...) asparagine). The chain crosses the membrane as a helical span at residues 38–61 (VAVPVVYAVICAVGLAGNSAVLYV). Residues 62 to 72 (LLRAPRMKTVT) lie on the Cytoplasmic side of the membrane. Residues 73–97 (NLFILNLAIADELFTLVLPINIADF) form a helical membrane-spanning segment. Topologically, residues 98 to 112 (LLRQWPFGELMCKLI) are extracellular. An intrachain disulfide couples Cys-109 to Cys-188. Residues 113–132 (VAIDQYNTFSSLYFLTVMSA) traverse the membrane as a helical segment. Over 133 to 157 (DRYLVVLATAESRRVAGRTYSAARA) the chain is Cytoplasmic. The helical transmembrane segment at 158 to 177 (VSLAVWGIVTLVVLPFAVFA) threads the bilayer. The Extracellular segment spans residues 178 to 202 (RLDDEQGRRQCVLVFPQPEAFWWRA). The helical transmembrane segment at 203–224 (SRLYTLVLGFAIPVSTICVLYT) threads the bilayer. The Cytoplasmic portion of the chain corresponds to 225 to 248 (TLLCRLHAMRLDSHAKALERAKKR). A helical transmembrane segment spans residues 249–273 (VTFLVVAILAVCLLCWTPYHLSTVV). Residues 274 to 283 (ALTTDLPQTP) are Extracellular-facing. The helical transmembrane segment at 284 to 298 (LVIAISYFITSLSYA) threads the bilayer. Over 299–328 (NSCLNPFLYAFLDASFRRNLRQLITCRAAA) the chain is Cytoplasmic.

It belongs to the G-protein coupled receptor 1 family. As to expression, found in cerebellum and frontal cortex. Detected at high levels in hippocampus, amygdala and trachea; at moderate levels in fetal brain, pituitary gland and prostate. Not in caudate, accumbens, kidney or liver. Also detected at high levels in lung carcinoma.

It localises to the cell membrane. Functionally, interacts specifically with a number of opioid ligands. Receptor for neuropeptides B and W, which may be involved in neuroendocrine system regulation, food intake and the organization of other signals. Has a higher affinity for neuropeptide B. This chain is Neuropeptides B/W receptor type 1 (NPBWR1), found in Homo sapiens (Human).